The sequence spans 906 residues: Peroxisomal hydratase-dehydrogenase-epimerase (906 aa).

Short-chain dehydrogenase like regions lie at residues 5–228 (DFKD…SSAE) and 319–532 (SLKD…GTDD). Positions 13, 52, 98, and 131 each coordinate NADP(+). Active-site proton donor residues include Ser149 and Tyr163. NADP(+) is bound by residues Tyr163 and Lys167. Tyr163 (proton acceptor) is an active-site residue. Lys167 acts as the Lowers pKa of active site Tyr in catalysis. Tyr467 functions as the Proton acceptor in the catalytic mechanism. Residues 600–633 (AVGGDDDDDDEDEEEDEGDEEEDEEDEEEDDPVW) are disordered. Positions 603–630 (GDDDDDDEDEEEDEGDEEEDEEDEEEDD) are enriched in acidic residues. His699, Gly700, Lys729, Tyr757, Asp808, Asn810, Gly831, Phe856, Thr857, and Gly858 together coordinate (3R)-3-hydroxydecanoyl-CoA. One can recognise a MaoC-like domain in the interval 782–893 (APKRAPDYQV…VVDRGTIAIN (112 aa)). The Microbody targeting signal signature appears at 904-906 (AKI).

Belongs to the short-chain dehydrogenases/reductases (SDR) family. In terms of assembly, monomer.

It localises to the peroxisome. It catalyses the reaction a (3R)-3-hydroxyacyl-CoA = a (2E)-enoyl-CoA + H2O. It carries out the reaction a (3R)-3-hydroxyacyl-CoA + NAD(+) = a 3-oxoacyl-CoA + NADH + H(+). It participates in lipid metabolism; fatty acid beta-oxidation. Its function is as follows. Second trifunctional enzyme acting on the beta-oxidation pathway for fatty acids, possessing hydratase-dehydrogenase-epimerase activities. Converts trans-2-enoyl-CoA via D-3-hydroxyacyl-CoA to 3-ketoacyl-CoA. The chain is Peroxisomal hydratase-dehydrogenase-epimerase from Candida tropicalis (Yeast).